We begin with the raw amino-acid sequence, 565 residues long: Coiled-coil domain-containing protein 17 (565 aa).

Positions 58–87 are disordered; sequence IMAQEKSRDQEASTSALKRLTEETAGSPGE. Coiled-coil stretches lie at residues 97–160 and 219–271; these read ARRM…TLGA and LQLQ…KVLS.

This chain is Coiled-coil domain-containing protein 17 (Ccdc17), found in Mus musculus (Mouse).